The primary structure comprises 162 residues: Dihydrofolate reductase (162 aa).

In terms of domain architecture, DHFR spans 3-161 (KITLIAACAE…TRYAFVHYLR (159 aa)). Residue 7-9 (IAA) participates in substrate binding. Residues 8–9 (AA) and 16–21 (IGAGNA) each bind NADP(+). Aspartate 29 contacts substrate. NADP(+) is bound at residue 45–48 (GRKT). Arginine 60 contacts substrate. NADP(+) contacts are provided by residues 65–68 (ISRQ) and 98–103 (MGGAQI). Threonine 117 lines the substrate pocket.

It belongs to the dihydrofolate reductase family.

The enzyme catalyses (6S)-5,6,7,8-tetrahydrofolate + NADP(+) = 7,8-dihydrofolate + NADPH + H(+). It functions in the pathway cofactor biosynthesis; tetrahydrofolate biosynthesis; 5,6,7,8-tetrahydrofolate from 7,8-dihydrofolate: step 1/1. Key enzyme in folate metabolism. Catalyzes an essential reaction for de novo glycine and purine synthesis, and for DNA precursor synthesis. The sequence is that of Dihydrofolate reductase (folA) from Neisseria meningitidis serogroup B (strain ATCC BAA-335 / MC58).